Reading from the N-terminus, the 617-residue chain is ATP-dependent zinc metalloprotease FtsH (617 aa).

The Cytoplasmic segment spans residues 1 to 7 (MKIPFDR). Residues 8–28 (WLGWPTLLLLLLGLWLLGSSL) traverse the membrane as a helical segment. Residues 29–102 (RDQRTVEAVP…VSYRRVRESN (74 aa)) are Periplasmic-facing. The chain crosses the membrane as a helical span at residues 103–123 (WLSQLLSWMAGPLLLLGFWYF). Residues 124–617 (MSRRIDGQQG…GRPAAIRQVA (494 aa)) are Cytoplasmic-facing. Residue 198–205 (GPTGTGKT) participates in ATP binding. Zn(2+) is bound at residue histidine 421. Residue glutamate 422 is part of the active site. Positions 425 and 498 each coordinate Zn(2+).

The protein in the central section; belongs to the AAA ATPase family. This sequence in the C-terminal section; belongs to the peptidase M41 family. Homohexamer. Zn(2+) is required as a cofactor.

The protein resides in the cell inner membrane. In terms of biological role, acts as a processive, ATP-dependent zinc metallopeptidase for both cytoplasmic and membrane proteins. Plays a role in the quality control of integral membrane proteins. The chain is ATP-dependent zinc metalloprotease FtsH from Methylibium petroleiphilum (strain ATCC BAA-1232 / LMG 22953 / PM1).